The chain runs to 158 residues: uncharacterized protein (158 aa).

Over residues 1–21 the composition is skewed to polar residues; the sequence is MPHTGSQHTLQATPKTAQHTG. Disordered stretches follow at residues 1 to 89 and 107 to 158; these read MPHT…RVEG and EEEK…DAKT. 2 stretches are compositionally biased toward basic and acidic residues: residues 51–68 and 107–127; these read HTEG…DKAG and EEEK…RESR. A compositionally biased stretch (polar residues) spans 128 to 137; the sequence is QGTAHKSTCM. The segment covering 149–158 has biased composition (basic and acidic residues); sequence EIGKVEDAKT.

This is an uncharacterized protein from Encephalitozoon cuniculi (strain GB-M1) (Microsporidian parasite).